A 364-amino-acid chain; its full sequence is Putative glutamate--cysteine ligase 2-2 (364 aa).

This sequence belongs to the glutamate--cysteine ligase type 2 family. YbdK subfamily.

The catalysed reaction is L-cysteine + L-glutamate + ATP = gamma-L-glutamyl-L-cysteine + ADP + phosphate + H(+). Functionally, ATP-dependent carboxylate-amine ligase which exhibits weak glutamate--cysteine ligase activity. The protein is Putative glutamate--cysteine ligase 2-2 of Mycobacterium sp. (strain JLS).